Reading from the N-terminus, the 220-residue chain is Probable chemoreceptor glutamine deamidase CheD (220 aa).

It belongs to the CheD family.

The catalysed reaction is L-glutaminyl-[protein] + H2O = L-glutamyl-[protein] + NH4(+). Probably deamidates glutamine residues to glutamate on methyl-accepting chemotaxis receptors (MCPs), playing an important role in chemotaxis. The polypeptide is Probable chemoreceptor glutamine deamidase CheD (Cupriavidus metallidurans (strain ATCC 43123 / DSM 2839 / NBRC 102507 / CH34) (Ralstonia metallidurans)).